The sequence spans 54 residues: Putative ankyrin repeat protein RC0701 (54 aa).

The ANK repeat unit spans residues 17–46 (SGKTPLDWYSDYNATKIVETLIKNGGNVSS).

The sequence is that of Putative ankyrin repeat protein RC0701 from Rickettsia conorii (strain ATCC VR-613 / Malish 7).